Reading from the N-terminus, the 463-residue chain is Siroheme synthase (463 aa).

A precorrin-2 dehydrogenase /sirohydrochlorin ferrochelatase region spans residues 1–203 (MDYLPLFHKL…GQGAEAERLL (203 aa)). Residues 22–23 (EI) and 43–44 (PD) each bind NAD(+). Position 128 is a phosphoserine (S128). The segment at 216-463 (GEVYLVGAGP…LAWFEGSQNS (248 aa)) is uroporphyrinogen-III C-methyltransferase. P225 is an S-adenosyl-L-methionine binding site. D248 (proton acceptor) is an active-site residue. Residue K270 is the Proton donor of the active site. S-adenosyl-L-methionine contacts are provided by residues 301–303 (GGD), I306, 331–332 (TA), M383, and G412.

In the N-terminal section; belongs to the precorrin-2 dehydrogenase / sirohydrochlorin ferrochelatase family. This sequence in the C-terminal section; belongs to the precorrin methyltransferase family.

The catalysed reaction is uroporphyrinogen III + 2 S-adenosyl-L-methionine = precorrin-2 + 2 S-adenosyl-L-homocysteine + H(+). It carries out the reaction precorrin-2 + NAD(+) = sirohydrochlorin + NADH + 2 H(+). The enzyme catalyses siroheme + 2 H(+) = sirohydrochlorin + Fe(2+). It functions in the pathway cofactor biosynthesis; adenosylcobalamin biosynthesis; precorrin-2 from uroporphyrinogen III: step 1/1. The protein operates within cofactor biosynthesis; adenosylcobalamin biosynthesis; sirohydrochlorin from precorrin-2: step 1/1. It participates in porphyrin-containing compound metabolism; siroheme biosynthesis; precorrin-2 from uroporphyrinogen III: step 1/1. Its pathway is porphyrin-containing compound metabolism; siroheme biosynthesis; siroheme from sirohydrochlorin: step 1/1. It functions in the pathway porphyrin-containing compound metabolism; siroheme biosynthesis; sirohydrochlorin from precorrin-2: step 1/1. Its function is as follows. Multifunctional enzyme that catalyzes the SAM-dependent methylations of uroporphyrinogen III at position C-2 and C-7 to form precorrin-2 via precorrin-1. Then it catalyzes the NAD-dependent ring dehydrogenation of precorrin-2 to yield sirohydrochlorin. Finally, it catalyzes the ferrochelation of sirohydrochlorin to yield siroheme. The chain is Siroheme synthase from Pseudomonas putida (strain ATCC 700007 / DSM 6899 / JCM 31910 / BCRC 17059 / LMG 24140 / F1).